A 348-amino-acid chain; its full sequence is DNA-directed RNA polymerase subunit alpha (348 aa).

The alpha N-terminal domain (alpha-NTD) stretch occupies residues 1 to 243 (MLIKQGDRLI…DQISVFINFD (243 aa)). The alpha C-terminal domain (alpha-CTD) stretch occupies residues 260-348 (VNENLFKGID…WLKRKQQNEA (89 aa)).

It belongs to the RNA polymerase alpha chain family. In terms of assembly, homodimer. The RNAP catalytic core consists of 2 alpha, 1 beta, 1 beta' and 1 omega subunit. When a sigma factor is associated with the core the holoenzyme is formed, which can initiate transcription.

The enzyme catalyses RNA(n) + a ribonucleoside 5'-triphosphate = RNA(n+1) + diphosphate. Functionally, DNA-dependent RNA polymerase catalyzes the transcription of DNA into RNA using the four ribonucleoside triphosphates as substrates. The sequence is that of DNA-directed RNA polymerase subunit alpha from Oleidesulfovibrio alaskensis (strain ATCC BAA-1058 / DSM 17464 / G20) (Desulfovibrio alaskensis).